Here is a 206-residue protein sequence, read N- to C-terminus: Na(+)-translocating NADH-quinone reductase subunit E (206 aa).

The next 6 helical transmembrane spans lie at 12–32 (AVFV…FIAI), 36–56 (IQTA…TVPV), 85–105 (FLGL…LEMT), 118–138 (GIFL…LFMV), 148–168 (VVYG…LAGI), and 184–204 (LGIT…FSGV).

This sequence belongs to the NqrDE/RnfAE family. As to quaternary structure, composed of six subunits; NqrA, NqrB, NqrC, NqrD, NqrE and NqrF.

It localises to the cell inner membrane. The enzyme catalyses a ubiquinone + n Na(+)(in) + NADH + H(+) = a ubiquinol + n Na(+)(out) + NAD(+). NQR complex catalyzes the reduction of ubiquinone-1 to ubiquinol by two successive reactions, coupled with the transport of Na(+) ions from the cytoplasm to the periplasm. NqrA to NqrE are probably involved in the second step, the conversion of ubisemiquinone to ubiquinol. The sequence is that of Na(+)-translocating NADH-quinone reductase subunit E from Alcanivorax borkumensis (strain ATCC 700651 / DSM 11573 / NCIMB 13689 / SK2).